A 153-amino-acid polypeptide reads, in one-letter code: Ribosome maturation factor RimP (153 aa).

Belongs to the RimP family.

The protein resides in the cytoplasm. Its function is as follows. Required for maturation of 30S ribosomal subunits. This chain is Ribosome maturation factor RimP, found in Marinobacter nauticus (strain ATCC 700491 / DSM 11845 / VT8) (Marinobacter aquaeolei).